Reading from the N-terminus, the 560-residue chain is Synaptotagmin-5 (560 aa).

A helical membrane pass occupies residues 2–22 (GFIVGVVIGLLVGIAIIIGFV). The SMP-LTD domain maps to 67–249 (ERQKLTWLNH…WPVRKVIPII (183 aa)). The tract at residues 227–523 (EETIRDAVED…YIGRCILTLT (297 aa)) is phospholipid binding. C2 domains follow at residues 243–364 (RKVI…DVWL) and 417–535 (TTDE…KDWY). Residues D278, D284, D334, E336, D451, D457, D506, D508, and D513 each coordinate Ca(2+).

This sequence belongs to the synaptotagmin family. Requires Ca(2+) as cofactor.

It localises to the membrane. May be involved in membrane trafficking. In Arabidopsis thaliana (Mouse-ear cress), this protein is Synaptotagmin-5 (SYT5).